The chain runs to 153 residues: Large ribosomal subunit protein uL15 (153 aa).

The interval 21-42 (RGIGSGKGKTGGRGIKGQKSRS) is disordered. Over residues 23 to 35 (IGSGKGKTGGRGI) the composition is skewed to gly residues.

This sequence belongs to the universal ribosomal protein uL15 family. In terms of assembly, part of the 50S ribosomal subunit.

In terms of biological role, binds to the 23S rRNA. The protein is Large ribosomal subunit protein uL15 of Rickettsia peacockii (strain Rustic).